Consider the following 929-residue polypeptide: MLSKIIGSVVGTKNERELKRMHKVVSKINAYEATIQALSDEQLQQKTEEFKARHQNGESLDALLPEAFAVCREASLRVNGMRHYDVQLIGGITLHEGKIAEMKTGEGKTLMGTLAMYLNAISGKGVHLVTVNDYLAARDAELNRPLFGFLGMNVGVIYSQQPPQEKVAAYQADITYGTNNEYGFDYLRDNMVFSLREKKQRPLNFCIIDEIDSILIDEARTPLIISGQAEDSSRMYALINTIIPVLIRSKDEEANKNNEEEDFWIDEKNRQIEISEKGYEKIERFLIEVGELGENESLYSPSRLPLLAHVQAAIRAHHVFVKNIHYIVDDGEVVIVDENTGRTMPGRRWSEGLHQAVEAKENVEIQAENQTLATTTFQNFFRLYDKLSGMTGTADTEAAEFKSTYDLDVIVIPTHEPIARIDMDDQIFLTKLGKYKGIIREIQEIQAKGAPVLVGTATIEASEELSYLLDQEGVKHNVLNAKQHEREAEIIAQAGSPKSVTIATNMAGRGTDIILGGNWQSFIEDIDSVSPEEMQRLKAQWQIKHDQVVAAGGLHIIGSERHESRRIDNQLRGRAGRQGDPGMSRFFLSLEDDLMRIFAGDRVVNMMRAMGLKEDEAIEHKMVSKSIENAQGKVESRDFDARKNLLKYDDVANDQRKVIYGQRDDLLAEMDLLQAIKIMHQEVYNAMINQFIPPGSIDDQWNVDGLEDELENEFKIAMPINDWLDEDRRLDEEGLRAKLIQTALDRYDNRREQMGEKEAAQLERHFMLQSLDKHWKEHLTQMDQLRKGIHLRGYAQKNPEQEYKRESFELFQMMLGAIKSETVQDLSRVHIPTKEELAALEVQQRENAAHMQMQFEHSDIDNMDGGVERAAVQGRNVVAGAAGAGVAGAMAGNGNNDNEPNPYAGMNISRNAPCPCGSALKYKQCHGKI.

Residues glutamine 87, 105 to 109 (GEGKT), and aspartate 512 contribute to the ATP site. Residues cysteine 914, cysteine 916, cysteine 925, and histidine 926 each coordinate Zn(2+).

This sequence belongs to the SecA family. As to quaternary structure, monomer and homodimer. Part of the essential Sec protein translocation apparatus which comprises SecA, SecYEG and auxiliary proteins SecDF-YajC and YidC. Zn(2+) is required as a cofactor.

It is found in the cell inner membrane. The protein resides in the cytoplasm. It carries out the reaction ATP + H2O + cellular proteinSide 1 = ADP + phosphate + cellular proteinSide 2.. Its function is as follows. Part of the Sec protein translocase complex. Interacts with the SecYEG preprotein conducting channel. Has a central role in coupling the hydrolysis of ATP to the transfer of proteins into and across the cell membrane, serving both as a receptor for the preprotein-SecB complex and as an ATP-driven molecular motor driving the stepwise translocation of polypeptide chains across the membrane. This chain is Protein translocase subunit SecA, found in Psychrobacter arcticus (strain DSM 17307 / VKM B-2377 / 273-4).